We begin with the raw amino-acid sequence, 223 residues long: MPWAAGRRWAWITLILTIIAVLIQAAWLWLGTQNFVFSREEIAQLARQYAGLDHELAFSRLIVELRRLHPGHVLPDEELQWVFVNAGGWMGAMCILHASLSEYVLLFGTALGSHGHSGRYWAEISDTIISGTFHQWKEGTTKSEVFYPGETVVHGPGEATALEWGPNTWMVEYGRGVIPSTLFFALADTFFSTQDYLTLFYTLRAYARGLRLELTTYLFGQDS.

Residues 1 to 9 lie on the Lumenal side of the membrane; the sequence is MPWAAGRRW. The interval 2–8 is targeting to endoplasmic reticulum-associated lipid droplets; sequence PWAAGRR. The helical transmembrane segment at 10-30 threads the bilayer; that stretch reads AWITLILTIIAVLIQAAWLWL. The Cytoplasmic segment spans residues 31–223; it reads GTQNFVFSRE…LTTYLFGQDS (193 aa). Positions 99-106 are important for ligand-binding; the sequence is SLSEYVLL. The segment at 177-223 is C-terminal hydrophobic region; sequence VIPSTLFFALADTFFSTQDYLTLFYTLRAYARGLRLELTTYLFGQDS.

This sequence belongs to the ERG2 family. As to quaternary structure, homotrimer. Interacts with KCNA4. Interacts with KCNA2; cocaine consumption leads to increased interaction. Forms a ternary complex with ANK2 and ITPR3. The complex is disrupted by agonists. Interacts with RNF112 in an oxidative stress-regulated manner. In terms of tissue distribution, widely expressed with higher expression in liver, brain, kidney and thymus. Expressed throughout the brain with higher expression within cerebral cortex, hippocampus and cerebellum. Within the hippocampus expressed in cornu ammonis pyramidal neurons, the granular cells of the dentate gyrus as well as interneurons. Within the cerebellum, expressed in Purkinje cell bodies. Highly expressed in the brainstem and motor neurons of the spinal cord. Expressed by neural retina, retinal pigment epithelial cells and lens.

The protein resides in the nucleus inner membrane. Its subcellular location is the nucleus outer membrane. It is found in the nucleus envelope. The protein localises to the cytoplasmic vesicle. It localises to the endoplasmic reticulum membrane. The protein resides in the membrane. Its subcellular location is the lipid droplet. It is found in the cell junction. The protein localises to the cell membrane. It localises to the cell projection. The protein resides in the growth cone. Its subcellular location is the postsynaptic density membrane. Its function is as follows. Functions in lipid transport from the endoplasmic reticulum and is involved in a wide array of cellular functions probably through regulation of the biogenesis of lipid microdomains at the plasma membrane. Involved in the regulation of different receptors it plays a role in BDNF signaling and EGF signaling. Also regulates ion channels like the potassium channel and could modulate neurotransmitter release. Plays a role in calcium signaling through modulation together with ANK2 of the ITP3R-dependent calcium efflux at the endoplasmic reticulum. Plays a role in several other cell functions including proliferation, survival and death. Originally identified for its ability to bind various psychoactive drugs it is involved in learning processes, memory and mood alteration. Necessary for proper mitochondrial axonal transport in motor neurons, in particular the retrograde movement of mitochondria. Plays a role in protecting cells against oxidative stress-induced cell death via its interaction with RNF112. The chain is Sigma non-opioid intracellular receptor 1 (Sigmar1) from Mus musculus (Mouse).